Reading from the N-terminus, the 578-residue chain is Rhamnogalacturonate lyase (578 aa).

The first 27 residues, 1 to 27 (MHMNKPLQAWRTPLLTLIFVLPLTATG), serve as a signal peptide directing secretion.

The protein belongs to the polysaccharide lyase 4 family.

The protein localises to the secreted. It carries out the reaction Endotype eliminative cleavage of L-alpha-rhamnopyranosyl-(1-&gt;4)-alpha-D-galactopyranosyluronic acid bonds of rhamnogalacturonan I domains in ramified hairy regions of pectin leaving L-rhamnopyranose at the reducing end and 4-deoxy-4,5-unsaturated D-galactopyranosyluronic acid at the non-reducing end.. In terms of biological role, degrades the rhamnogalacturonan I (RG-I) backbone of pectin. Is required for the full virulence of E.chrysanthemi strain 3937 as it is involved in rotting of plant tissue. The sequence is that of Rhamnogalacturonate lyase (rhiE) from Dickeya dadantii (strain 3937) (Erwinia chrysanthemi (strain 3937)).